Here is a 317-residue protein sequence, read N- to C-terminus: Neurogenic differentiation factor 6-B (317 aa).

2 disordered regions span residues 1-90 and 297-317; these read MLTV…ERSR and DLHP…GYHN. Acidic residues predominate over residues 37 to 56; it reads EAEDDNTDREEEEEREEDEN. Over residues 59-69 the composition is skewed to basic residues; that stretch reads PKKKGPRKKKS. Positions 65-70 match the Nuclear localization signal motif; that stretch reads RKKKSE. Positions 70 to 90 are enriched in basic and acidic residues; sequence EGRGDRVKMRRQEANARERSR. In terms of domain architecture, bHLH spans 78–130; that stretch reads MRRQEANARERSRMHGLNDALESLRKVVPCYSKTQKLSKIETLRLAKNYIWAL. The span at 301-317 shows a compositional bias: polar residues; the sequence is RSQSFQSQDELNTGYHN.

Efficient DNA binding requires dimerization with another bHLH protein. In terms of tissue distribution, embryonic olfactory bulbs and olfactory placodes. In adult, expressed in brain and eye.

The protein localises to the nucleus. In terms of biological role, differentiation factor required for neurogenesis. Does not act as an upstream activator of isl1. This is Neurogenic differentiation factor 6-B from Danio rerio (Zebrafish).